Reading from the N-terminus, the 141-residue chain is Large ribosomal subunit protein uL16 (141 aa).

Residues 1 to 20 (MLMPKRTKYRKQQKGRNRGK) are disordered.

The protein belongs to the universal ribosomal protein uL16 family. As to quaternary structure, part of the 50S ribosomal subunit.

Binds 23S rRNA and is also seen to make contacts with the A and possibly P site tRNAs. The protein is Large ribosomal subunit protein uL16 of Nautilia profundicola (strain ATCC BAA-1463 / DSM 18972 / AmH).